The following is a 630-amino-acid chain: tRNA uridine 5-carboxymethylaminomethyl modification enzyme MnmG (630 aa).

Residue glycine 13 to glycine 18 coordinates FAD. Glycine 273–phenylalanine 287 provides a ligand contact to NAD(+).

This sequence belongs to the MnmG family. In terms of assembly, homodimer. Heterotetramer of two MnmE and two MnmG subunits. It depends on FAD as a cofactor.

The protein localises to the cytoplasm. Functionally, NAD-binding protein involved in the addition of a carboxymethylaminomethyl (cmnm) group at the wobble position (U34) of certain tRNAs, forming tRNA-cmnm(5)s(2)U34. The sequence is that of tRNA uridine 5-carboxymethylaminomethyl modification enzyme MnmG from Teredinibacter turnerae (strain ATCC 39867 / T7901).